The sequence spans 739 residues: Transcription activator of gluconeogenesis MCYG_04674 (739 aa).

Residues 1-33 show a composition bias toward polar residues; it reads MSPHQTTGQESDNMAVNGENAQASSQYIQLNSE. The segment at 1 to 62 is disordered; it reads MSPHQTTGQE…PSRPKRKKAK (62 aa). The span at 40–55 shows a compositional bias: basic and acidic residues; it reads AAEKKAAAAKAKDPSR. Positions 65-93 form a DNA-binding region, zn(2)-C6 fungal-type; the sequence is CYACQRGHLTCGDERPCQRCIKRGFQDAC. Disordered regions lie at residues 174–223, 264–308, 380–420, 537–574, and 639–668; these read GPEN…QFNS, DTPP…GDSG, SRQN…HKNA, NHNV…STTA, and AQNN…GQRR. Polar residues-rich tracts occupy residues 267-284 and 397-411; these read PSDN…SSGT and PVVS…NLNI. A compositionally biased stretch (low complexity) spans 547–557; it reads GLLTGSTSRGS. Over residues 562–574 the composition is skewed to polar residues; it reads PYSSDQFNSSTTA. Residues 653–664 are compositionally biased toward low complexity; that stretch reads NSSSNGTTSTGR.

It belongs to the ERT1/acuK family.

It is found in the nucleus. In terms of biological role, transcription factor which regulates nonfermentable carbon utilization. Activator of gluconeogenetic genes. The protein is Transcription activator of gluconeogenesis MCYG_04674 of Arthroderma otae (strain ATCC MYA-4605 / CBS 113480) (Microsporum canis).